The chain runs to 440 residues: Cobyrinate a,c-diamide synthase (440 aa).

One can recognise a GATase cobBQ-type domain in the interval 247 to 428 (RIAIAYDAAF…MHLYFPSNPR (182 aa)). Residue Cys-329 is the Nucleophile of the active site.

Belongs to the CobB/CbiA family. The cofactor is Mg(2+).

The catalysed reaction is cob(II)yrinate + 2 L-glutamine + 2 ATP + 2 H2O = cob(II)yrinate a,c diamide + 2 L-glutamate + 2 ADP + 2 phosphate + 2 H(+). It participates in cofactor biosynthesis; adenosylcobalamin biosynthesis; cob(II)yrinate a,c-diamide from sirohydrochlorin (anaerobic route): step 10/10. In terms of biological role, catalyzes the ATP-dependent amidation of the two carboxylate groups at positions a and c of cobyrinate, using either L-glutamine or ammonia as the nitrogen source. This Picrophilus torridus (strain ATCC 700027 / DSM 9790 / JCM 10055 / NBRC 100828 / KAW 2/3) protein is Cobyrinate a,c-diamide synthase.